A 174-amino-acid polypeptide reads, in one-letter code: Protein C (174 aa).

Belongs to the morbillivirus protein C family.

The polypeptide is Protein C (P/V/C) (Canine distemper virus (strain Onderstepoort) (CDV)).